The chain runs to 901 residues: Alanine--tRNA ligase (901 aa).

Zn(2+) contacts are provided by His-581, His-585, Cys-684, and His-688.

Belongs to the class-II aminoacyl-tRNA synthetase family. Zn(2+) serves as cofactor.

It is found in the cytoplasm. The catalysed reaction is tRNA(Ala) + L-alanine + ATP = L-alanyl-tRNA(Ala) + AMP + diphosphate. In terms of biological role, catalyzes the attachment of alanine to tRNA(Ala) in a two-step reaction: alanine is first activated by ATP to form Ala-AMP and then transferred to the acceptor end of tRNA(Ala). Also edits incorrectly charged Ser-tRNA(Ala) and Gly-tRNA(Ala) via its editing domain. This chain is Alanine--tRNA ligase, found in Mycobacterium marinum (strain ATCC BAA-535 / M).